The primary structure comprises 518 residues: Uronate isomerase (518 aa).

It belongs to the metallo-dependent hydrolases superfamily. Uronate isomerase family.

It catalyses the reaction D-glucuronate = D-fructuronate. It carries out the reaction aldehydo-D-galacturonate = keto-D-tagaturonate. The protein operates within carbohydrate metabolism; pentose and glucuronate interconversion. The protein is Uronate isomerase (uxaC) of Corynebacterium glutamicum (strain ATCC 13032 / DSM 20300 / JCM 1318 / BCRC 11384 / CCUG 27702 / LMG 3730 / NBRC 12168 / NCIMB 10025 / NRRL B-2784 / 534).